A 225-amino-acid polypeptide reads, in one-letter code: MRLGKPKGGISRSSSQGKVYENQRKTGRQRQRWGMTVRFDSSLRRLRRGLDEKPYKCVECEKSFSQSSTLFQHQKIHTGKKSHKCADCGKSFFQSSNLIQHRRVHTGEKPYRCDECGERFKQSSNLIQHQRIHTGEKPYQCDECGRCFSQSSHLIQHQRTHTGEKPYQCSECGKCFSQSSHLRQHTKVHEEEKPRKTRGRSLRAKTHSLSSWKAGKGRRSAAGLR.

A disordered region spans residues 1-35 (MRLGKPKGGISRSSSQGKVYENQRKTGRQRQRWGM). At Lys18 the chain carries N6-acetyllysine. 5 consecutive C2H2-type zinc fingers follow at residues 55–77 (YKCV…QKIH), 83–105 (HKCA…RRVH), 111–133 (YRCD…QRIH), 139–161 (YQCD…QRTH), and 167–189 (YQCS…TKVH). The tract at residues 183 to 225 (RQHTKVHEEEKPRKTRGRSLRAKTHSLSSWKAGKGRRSAAGLR) is disordered. Over residues 195–206 (RKTRGRSLRAKT) the composition is skewed to basic residues.

The protein belongs to the krueppel C2H2-type zinc-finger protein family.

It localises to the nucleus. In terms of biological role, binds DNA through the consensus sequence 5'-CAATG-3'. May be involved in transcriptional regulation and may play a role in tooth formation. The protein is Zinc finger protein 22 (ZNF22) of Bos taurus (Bovine).